A 297-amino-acid chain; its full sequence is NAD(P)-dependent methylenetetrahydromethanopterin dehydrogenase (297 aa).

To M.extorquens MtdA. In terms of assembly, homohexamer.

The protein localises to the cytoplasm. It catalyses the reaction 5,10-methylenetetrahydromethanopterin + NAD(+) = 5,10-methenyl-5,6,7,8-tetrahydromethanopterin + NADH. The enzyme catalyses 5,10-methylenetetrahydromethanopterin + NADP(+) = 5,10-methenyl-5,6,7,8-tetrahydromethanopterin + NADPH. Its pathway is one-carbon metabolism; formaldehyde degradation; formate from formaldehyde (H(4)MPT route): step 2/5. Functionally, catalyzes the dehydrogenation of methylene-H(4)MPT. In Methylorubrum extorquens (strain ATCC 14718 / DSM 1338 / JCM 2805 / NCIMB 9133 / AM1) (Methylobacterium extorquens), this protein is NAD(P)-dependent methylenetetrahydromethanopterin dehydrogenase (mtdB).